The following is a 116-amino-acid chain: uncharacterized protein (116 aa).

The chain crosses the membrane as a helical span at residues 58–78 (IIVDFKFIFQIFLILSFGFFA).

The protein resides in the membrane. This is an uncharacterized protein from Rickettsia prowazekii (strain Madrid E).